The sequence spans 417 residues: Putative competence-damage inducible protein (417 aa).

This sequence belongs to the CinA family.

In Leuconostoc citreum (strain KM20), this protein is Putative competence-damage inducible protein.